A 194-amino-acid chain; its full sequence is UPF0301 protein BQ03640 (194 aa).

It belongs to the UPF0301 (AlgH) family.

The chain is UPF0301 protein BQ03640 from Bartonella quintana (strain Toulouse) (Rochalimaea quintana).